A 186-amino-acid chain; its full sequence is ATP synthase subunit delta (186 aa).

The protein belongs to the ATPase delta chain family. F-type ATPases have 2 components, F(1) - the catalytic core - and F(0) - the membrane proton channel. F(1) has five subunits: alpha(3), beta(3), gamma(1), delta(1), epsilon(1). F(0) has three main subunits: a(1), b(2) and c(10-14). The alpha and beta chains form an alternating ring which encloses part of the gamma chain. F(1) is attached to F(0) by a central stalk formed by the gamma and epsilon chains, while a peripheral stalk is formed by the delta and b chains.

The protein localises to the cell inner membrane. Its function is as follows. F(1)F(0) ATP synthase produces ATP from ADP in the presence of a proton or sodium gradient. F-type ATPases consist of two structural domains, F(1) containing the extramembraneous catalytic core and F(0) containing the membrane proton channel, linked together by a central stalk and a peripheral stalk. During catalysis, ATP synthesis in the catalytic domain of F(1) is coupled via a rotary mechanism of the central stalk subunits to proton translocation. Functionally, this protein is part of the stalk that links CF(0) to CF(1). It either transmits conformational changes from CF(0) to CF(1) or is implicated in proton conduction. The chain is ATP synthase subunit delta from Mesorhizobium japonicum (strain LMG 29417 / CECT 9101 / MAFF 303099) (Mesorhizobium loti (strain MAFF 303099)).